A 166-amino-acid polypeptide reads, in one-letter code: Kelch repeat protein B10 (166 aa).

Kelch repeat units follow at residues 25–76 (TIFV…STFG) and 77–129 (MLYF…KLNN).

This sequence belongs to the poxviruses Kelch family.

In Oryctolagus cuniculus (Rabbit), this protein is Kelch repeat protein B10.